Reading from the N-terminus, the 307-residue chain is Transmembrane protein 200B (307 aa).

The tract at residues 1–38 (MTAGSPEECGEVRRSPEGRVSRLGRRLGRRRRPRSPPE) is disordered. The segment covering 10 to 20 (GEVRRSPEGRV) has biased composition (basic and acidic residues). Residues 22-34 (RLGRRLGRRRRPR) show a composition bias toward basic residues. A helical transmembrane segment spans residues 53-73 (GAFAALGALVVLVGMGIAVAG). Residues 81–111 (APGSRAANASSPQMSELRREGRGGGRAHGPH) form a disordered region. The N-linked (GlcNAc...) asparagine glycan is linked to asparagine 88. Residues 96–111 (ELRREGRGGGRAHGPH) are compositionally biased toward basic and acidic residues. Residues 116-136 (LLGPVIMGVGLFVFICANTLL) traverse the membrane as a helical segment. The tract at residues 180–211 (AVGCAEPEIWDPSPRRGTSPVPSVRSLRSEPA) is disordered.

It belongs to the TMEM200 family.

The protein resides in the membrane. This chain is Transmembrane protein 200B (TMEM200B), found in Homo sapiens (Human).